A 2839-amino-acid polypeptide reads, in one-letter code: Bifunctional DNA-directed RNA polymerase subunit beta-beta' (2839 aa).

The segment at methionine 1 to asparagine 1433 is DNA-directed RNA polymerase subunit beta. Positions isoleucine 1436–asparagine 2839 are DNA-directed RNA polymerase subunit beta'. Zn(2+)-binding residues include cysteine 1501, cysteine 1503, cysteine 1516, and cysteine 1519. Mg(2+) is bound by residues aspartate 1893, aspartate 1895, and aspartate 1897. Zn(2+)-binding residues include cysteine 2238, cysteine 2312, cysteine 2319, and cysteine 2322.

The protein in the N-terminal section; belongs to the RNA polymerase beta chain family. This sequence in the C-terminal section; belongs to the RNA polymerase beta' chain family. As to quaternary structure, the RNAP catalytic core consists of 2 alpha, 1 beta/beta' and 1 omega subunit. When a sigma factor is associated with the core the holoenzyme is formed, which can initiate transcription. Mg(2+) serves as cofactor. It depends on Zn(2+) as a cofactor.

The enzyme catalyses RNA(n) + a ribonucleoside 5'-triphosphate = RNA(n+1) + diphosphate. Its function is as follows. DNA-dependent RNA polymerase catalyzes the transcription of DNA into RNA using the four ribonucleoside triphosphates as substrates. This chain is Bifunctional DNA-directed RNA polymerase subunit beta-beta' (rpoBC), found in Wolbachia sp. subsp. Brugia malayi (strain TRS).